Here is a 401-residue protein sequence, read N- to C-terminus: NADH-ubiquinone oxidoreductase 49 kDa subunit (401 aa).

The protein belongs to the complex I 49 kDa subunit family.

Its subcellular location is the mitochondrion. The catalysed reaction is a ubiquinone + NADH + 5 H(+)(in) = a ubiquinol + NAD(+) + 4 H(+)(out). Functionally, core subunit of the mitochondrial membrane respiratory chain NADH dehydrogenase (Complex I) that is believed to belong to the minimal assembly required for catalysis. Complex I functions in the transfer of electrons from NADH to the respiratory chain. The immediate electron acceptor for the enzyme is believed to be ubiquinone. Component of the iron-sulfur (IP) fragment of the enzyme. The sequence is that of NADH-ubiquinone oxidoreductase 49 kDa subunit (NAD7) from Acanthamoeba castellanii (Amoeba).